The chain runs to 1469 residues: Chromosome condensation protein dpy-27 (1469 aa).

Residues 1 to 25 form a disordered region; the sequence is MQPFKRRALTSDDDRPYADTDSMPE. Residues 9–18 are compositionally biased toward basic and acidic residues; sequence LTSDDDRPYA. An ATP-binding site is contributed by 122–129; it reads GPNGSGKS. Residues 356-542 are a coiled coil; sequence ELEENKDIML…KGTLQTMMAE (187 aa). In terms of domain architecture, SMC hinge spans 621 to 736; that stretch reads PGFKGRLGDL…VDSLEEATRI (116 aa). The disordered stretch occupies residues 758-781; the sequence is GALTGGGKPTTGRIRNDNNPNMSG. Coiled coils occupy residues 805 to 974, 1016 to 1056, and 1159 to 1182; these read LKLQ…AQLE, AYQT…DIIE, and TSAK…RMAR. Residues 1404–1469 are disordered; that stretch reads LPEFNRFPPA…VQRRVRRSRH (66 aa). The span at 1439–1449 shows a compositional bias: acidic residues; it reads EEEDEEDELIE.

It belongs to the SMC family. SMC4 subfamily. As to quaternary structure, component of the dosage compensation complex, which contains the mix-1/SMC2 and dpy-27/SMC4 heterodimer, and three non SMC subunits that probably regulate the complex: dpy-26, capg-1 and dpy-28. Within the complex, interacts with dpy-28, mix-1, dpy-26 and capg-1. Interacts with dpy-21. Interacts with dpy-28; the interaction is required for dpy-28 protein stability and dpy-28 association with the X chromosome. Interacts with smcl-1.

The protein resides in the nucleus. The protein localises to the chromosome. Its function is as follows. Central component of the condensin I-like dosage compensation complex that associates specifically with hermaphrodite X chromosomes to reduce their gene transcription throughout development. Its strong similarity with the condensin subunit smc4 suggests that it may reduce the X-chromosome transcript level by condensing the chromatin structure during interphase. Involved in the recruitment of the dosage compensation proteins mix-1 and dpy-21 to the X chromosome. Might be involved in the reduction of histone H4 lysine 16 acetylation (H4K16ac) on dosage compensated X chromosomes. As a member of the dosage compensation complex, also binds to regulatory regions of the autosomal her-1 gene, required for male development, possibly contributing to its repression in hermaphrodites. Also plays a role in the regulation of growth and body fat metabolism downstream of the TOR complex 2 pathway. The sequence is that of Chromosome condensation protein dpy-27 (dpy-27) from Caenorhabditis elegans.